Here is a 471-residue protein sequence, read N- to C-terminus: MPN domain-containing protein (471 aa).

Residues 1-10 (MAAPEPLSPA) show a composition bias toward low complexity. The segment at 1 to 63 (MAAPEPLSPA…GGGGAGAGGC (63 aa)) is disordered. An N-acetylalanine modification is found at Ala2. Ser8 is subject to Phosphoserine. The span at 16-29 (EAPEEDEDEAEAED) shows a compositional bias: acidic residues. Residues 36–63 (GAGGGRSGGGGSSVSGGGGGGGAGAGGC) are compositionally biased toward gly residues. The RAMA domain maps to 71–166 (TRRAVTLRVL…KYKATWLRLH (96 aa)). DNA contacts are provided by Ser123, Ser125, and Trp145. The interval 170–229 (TPATAADESPASEGEEEELLMEEEEEDVLAGVSAEDKSRRPLGKSPSEPAHPEATTPGKR) is disordered. Phosphoserine occurs at positions 178 and 181. The span at 182 to 197 (EGEEEELLMEEEEEDV) shows a compositional bias: acidic residues. The region spanning 272 to 407 (VAVSSNVLFL…PESKISPFWV (136 aa)) is the MPN domain. Residues His349, His351, and Asp362 each coordinate Zn(2+). The JAMM motif motif lies at 349–362 (HSHPHSPALPSLQD).

Belongs to the peptidase M67 family. Monomer. Mainly monomoric, but when binds to dsDNA, forms homotetramer assembled into two homodimers. May interact with histones; this interaction is facilitated by dsDNA binding. Post-translationally, degraded following binding to N(6)-methyladenosine methylated DNA (m6A).

Probable protease. Acts as a sensor of N(6)-methyladenosine methylation on DNA (m6A): recognizes and binds m6A DNA, leading to its degradation. Binds only double strand DNA (dsDNA) in a sequence-independent manner. This is MPN domain-containing protein from Homo sapiens (Human).